A 591-amino-acid polypeptide reads, in one-letter code: MTLFILTETSAGYALLKAKDKKLLKRDDLATEASTAEGVSNLVKLKSFQKFDSAATALEEVASLVEGKVTPRLASLLDEIKDEKKVSLAVADPKLGNAIGKLPGMSIQLVADSTTTDIFRAIREHLPTLIPGLLPQDMSTMSLGLSHSLARHKLKFSPDKIDTMIVQAIGLLDDLDKELNTYAMRVKEWYGWHFPELAKILNDNIAYAKLVLKMGMRSNWETADLAEILPEELEGTVKAAADRSMGTEISQEDLENIQALAEQVVGFAEYRQQLAGYLTARMNAIAPNLTALVGELVGARLIAHAGSLTNLSKSPASTIQILGAEKALFRALKTKHDTPKYGLIYHASLIGQATGKNKGKMARVLAAKASLGLRVDALAEWDDDATEEDKAALGTEARYNLERKLAAMEGKPLKPRGVAIGPNGASVQPKKFEINETRRYNADADALTGDQPASKKDKKLIEEVSDEEMADADSDEEPKANGTKDDDSSDESEEESSKKHKSKKGKDTELEKMAEKAGLSVKRYKRKLERGEITFDANGNPSATSKKELKKAKKEAKKASKGDEKKRKRSDDGEEADNGEKKKKKKKKGEE.

A Nop domain is found at 285-410; the sequence is IAPNLTALVG…LERKLAAMEG (126 aa). A disordered region spans residues 413–591; that stretch reads LKPRGVAIGP…KKKKKKKGEE (179 aa). Basic and acidic residues-rich tracts occupy residues 430–442 and 453–462; these read KKFE…RYNA and ASKKDKKLIE. The span at 463–476 shows a compositional bias: acidic residues; it reads EVSDEEMADADSDE. 3 stretches are compositionally biased toward basic and acidic residues: residues 477 to 486, 505 to 515, and 557 to 571; these read EPKANGTKDD, GKDTELEKMAE, and KKAS…KRSD. Over residues 581–591 the composition is skewed to basic residues; it reads KKKKKKKKGEE.

Belongs to the NOP5/NOP56 family.

The protein resides in the nucleus. The protein localises to the nucleolus. Functionally, required for pre-18S rRNA processing. May bind microtubules. The sequence is that of Nucleolar protein 58 (nop58) from Neosartorya fischeri (strain ATCC 1020 / DSM 3700 / CBS 544.65 / FGSC A1164 / JCM 1740 / NRRL 181 / WB 181) (Aspergillus fischerianus).